Here is a 295-residue protein sequence, read N- to C-terminus: Ankyrin repeat and SOCS box protein 17 (295 aa).

The ANK repeat unit spans residues 146–176; that stretch reads SGITPLLYVAQTRQSNILKILLQYGILEREN. The SOCS box domain maps to 232 to 295; the sequence is LGRRPIISNW…CLQNYLNLES (64 aa).

This sequence belongs to the ankyrin SOCS box (ASB) family.

It functions in the pathway protein modification; protein ubiquitination. In terms of biological role, may be a substrate-recognition component of a SCF-like ECS (Elongin-Cullin-SOCS-box protein) E3 ubiquitin-protein ligase complex which mediates the ubiquitination and subsequent proteasomal degradation of target proteins. The chain is Ankyrin repeat and SOCS box protein 17 (ASB17) from Bos taurus (Bovine).